Here is a 74-residue protein sequence, read N- to C-terminus: RNA-binding protein Hfq (74 aa).

The 61-residue stretch at 9–69 (DQFLNQLRKE…ISTFMPQKNV (61 aa)) folds into the Sm domain.

It belongs to the Hfq family. Homohexamer.

RNA chaperone that binds small regulatory RNA (sRNAs) and mRNAs to facilitate mRNA translational regulation in response to envelope stress, environmental stress and changes in metabolite concentrations. Also binds with high specificity to tRNAs. The chain is RNA-binding protein Hfq from Bacillus cytotoxicus (strain DSM 22905 / CIP 110041 / 391-98 / NVH 391-98).